The primary structure comprises 256 residues: Low molecular mass lipoprotein PBMHP-6 (256 aa).

Residues 1–19 form the signal peptide; that stretch reads MRLTLFAFVLAVCALASNA.

Belongs to the 30 kDa lipoprotein family.

The protein resides in the secreted. The polypeptide is Low molecular mass lipoprotein PBMHP-6 (Bombyx mori (Silk moth)).